Here is a 581-residue protein sequence, read N- to C-terminus: Pectinesterase 3 (581 aa).

Positions 1 to 55 (MDTIKSFKGYGKVNELEQQAYEKKTRKRLIIIAVSSIVLIAVIIAAVAGVVIHNR) are cleaved as a signal peptide. N101, N156, N200, N217, and N268 each carry an N-linked (GlcNAc...) asparagine glycan. Substrate contacts are provided by T348 and Q378. The active-site Proton donor is D401. A disulfide bond links C415 and C435. The active-site Nucleophile is the D422. N-linked (GlcNAc...) asparagine glycosylation occurs at N477. Residues R486 and W488 each coordinate substrate.

It in the N-terminal section; belongs to the PMEI family. This sequence in the C-terminal section; belongs to the pectinesterase family.

The protein localises to the secreted. Its subcellular location is the cell wall. It carries out the reaction [(1-&gt;4)-alpha-D-galacturonosyl methyl ester](n) + n H2O = [(1-&gt;4)-alpha-D-galacturonosyl](n) + n methanol + n H(+). Its pathway is glycan metabolism; pectin degradation; 2-dehydro-3-deoxy-D-gluconate from pectin: step 1/5. In terms of biological role, may have roles in the deposition of pectin in developing tissues and in the wall loosening and cell separation that occurs in cell expansion, fruit ripening and abscission. The chain is Pectinesterase 3 (MPE3) from Phaseolus vulgaris (Kidney bean).